Reading from the N-terminus, the 236-residue chain is MKMMDANEIISFIQNSKKSTPVKVYIKGDLEGIDFGSSAKTFITGNVGVVFGEWQDIQAAIEANQDKIEDYVVENDRRNSAIPLLDLKGIKARIEPGAIIRDHVEIGDNAVIMMGAVINIGAVVGEGTMIDMNAVLGGRATVGKNCHIGAGAVLAGVIEPPSAKPVVIEDDVLVGANAVILEGVTVGKGAVVAAGAVVVEDVPPYTVVAGVPARVIKQIDEQTRAKTEIKQELRQL.

The protein belongs to the transferase hexapeptide repeat family. DapH subfamily.

The enzyme catalyses (S)-2,3,4,5-tetrahydrodipicolinate + acetyl-CoA + H2O = L-2-acetamido-6-oxoheptanedioate + CoA. The protein operates within amino-acid biosynthesis; L-lysine biosynthesis via DAP pathway; LL-2,6-diaminopimelate from (S)-tetrahydrodipicolinate (acetylase route): step 1/3. In terms of biological role, catalyzes the transfer of an acetyl group from acetyl-CoA to tetrahydrodipicolinate. The chain is 2,3,4,5-tetrahydropyridine-2,6-dicarboxylate N-acetyltransferase from Geobacillus kaustophilus (strain HTA426).